Reading from the N-terminus, the 181-residue chain is Probable cobalt-precorrin-6B C(15)-methyltransferase (decarboxylating) (181 aa).

S-adenosyl-L-methionine is bound by residues Thr-16, 40 to 44, Asp-61, and Ala-89; that span reads GCGSG.

It belongs to the methyltransferase superfamily. Archaeal-type CbiT family.

It carries out the reaction Co-precorrin-6B + S-adenosyl-L-methionine = Co-precorrin-7 + S-adenosyl-L-homocysteine + CO2. The protein operates within cofactor biosynthesis; adenosylcobalamin biosynthesis; cob(II)yrinate a,c-diamide from sirohydrochlorin (anaerobic route): step 8/10. Functionally, catalyzes the methylation of C-15 in cobalt-precorrin-6B followed by the decarboxylation of C-12 to form cobalt-precorrin-7. The sequence is that of Probable cobalt-precorrin-6B C(15)-methyltransferase (decarboxylating) from Methanococcus maripaludis (strain DSM 14266 / JCM 13030 / NBRC 101832 / S2 / LL).